A 451-amino-acid polypeptide reads, in one-letter code: MLLRVAWRRASLAATSVALRRSSVPTRGLRLRVVDHAPHSAVPSEAEAVLRPLYMDVRATTPLDPRVLDAMLPYLVNYYGNPHSRTHAYGWESEAAMERARQQVASLIGADPREIIFTSGATESNNIAIKGVARFYRSRKKHLVTTQTEHKCVLDSCRSLEAEGFRVTYLPVQKSGIIDLKELEAAIQPDTSLVSVMTVNNEIGVKQPIAEIGQICSSRKLYFHTDAAQAVGKIPLDVNDMKIDLMSISGHKLYGPKGVGAIYIRRRPRVRVEALQSGGGQERGMRSGTVPTPLVVGLGAACELAQQEMEYDHKRISKLAERLIQKIMKNLPDVVMNGDPKQHYPGCINLSFAYVEGESLLMALKDVALSSGSACTSASLEPSYVLRAIGTDEDLAHSSIRFGIGRFTTEEEVDYTVQKCIHHVKRLREMSPLWEMVQDGIDLKSIKWTQH.

5 residues coordinate pyridoxal 5'-phosphate: alanine 121, threonine 122, glutamine 229, serine 249, and histidine 251. Lysine 252 carries the N6-(pyridoxal phosphate)lysine modification. Threonine 289 provides a ligand contact to pyridoxal 5'-phosphate. The active-site Cysteine persulfide intermediate is cysteine 375. Position 375 (cysteine 375) interacts with [2Fe-2S] cluster. Cysteine 375 is a Zn(2+) binding site. Position 375 is a cysteine persulfide (cysteine 375).

Belongs to the class-V pyridoxal-phosphate-dependent aminotransferase family. NifS/IscS subfamily. Homodimer. Component of the mitochondrial core iron-sulfur cluster (ISC) complex composed of NFS1, LYRM4, NDUFAB1, ISCU, FXN, and FDX2; this complex is a heterohexamer containing two copies of each monomer. Component of cyteine desulfurase complex composed of NFS1, LYRM4 and NDUFAB1; this complex contributes to the activation of cysteine desulfurase activity and NFS1 stabilization. Interacts (homodimer form) with ISCU (D-state); each monomer interacts with the C-terminal regions of each NFS1 monomer. Interacts with HSPA9. Interacts (via homodimer form) with FDX2. Interacts (via homodimer form) with FXN. Interacts with LYRM4. Component of a complex composed of FXN, NFS1, LYRM4 and ISCU. In terms of assembly, monomer. Homodimer. Oligomer. Interacts with ISCU. Component of the cysteine desulfurase complex composed of NFS1 and LYRM4; this complex contributes to the activation of cysteine desulfurase activity. Interacts with MOCS3. Pyridoxal 5'-phosphate serves as cofactor. N-gluconoylated. In terms of processing, cysteine persulfide intermediate is reduced by thiol-containing molecules like glutathione and L-cysteine. Persulfide reduction is a rate-limiting step of cysteine desulfurase catalytic cycle.

It is found in the mitochondrion. Its subcellular location is the cytoplasm. The protein resides in the nucleus. It localises to the cytoskeleton. The protein localises to the microtubule organizing center. It is found in the centrosome. It carries out the reaction (sulfur carrier)-H + L-cysteine = (sulfur carrier)-SH + L-alanine. The catalysed reaction is L-cysteinyl-[cysteine desulfurase] + L-cysteine = S-sulfanyl-L-cysteinyl-[cysteine desulfurase] + L-alanine. Active only in complex with LYRM4. Cysteine desulfurase, of the core iron-sulfur cluster (ISC) assembly complex, that catalyzes the desulfuration of L-cysteine to L-alanine, as component of the cysteine desulfurase complex leading to the formation of a cysteine persulfide intermediate at the active site cysteine residue and participates in the [2Fe-2S] clusters assembly on the scaffolding protein ISCU. The persulfide is then transferred on the flexible Cys loop from the catalytic site of NFS1 to the surface of NFS1. After the NFS1-linked persulfide sulfur is transferred to one of the conserved Cys residues of the scaffold, a reaction assisted by FXN. The core iron-sulfur cluster (ISC) assembly complex is involved in the de novo synthesis of a [2Fe-2S] cluster, the first step of the mitochondrial iron-sulfur protein biogenesis. This process is initiated by the cysteine desulfurase complex (NFS1:LYRM4:NDUFAB1) that produces persulfide which is delivered on the scaffold protein ISCU in a FXN-dependent manner. Then this complex is stabilized by FDX2 which provides reducing equivalents to accomplish the [2Fe-2S] cluster assembly. Finally, the [2Fe-2S] cluster is transferred from ISCU to chaperone proteins, including HSCB, HSPA9 and GLRX5. Functionally, may catalyze the desulfuration of L-cysteine to L-alanine as component of the cysteine desulfurase complex (NFS1:LYRM4), leading to the formation of a cysteine persulfide intermediate. Acts as a sulfur donor for MOCS3 by transferring the sulfur of the cysteine persulfide intermediate on MOCS3. The chain is Cysteine desulfurase from Rattus norvegicus (Rat).